We begin with the raw amino-acid sequence, 345 residues long: Phosphoribosylformylglycinamidine cyclo-ligase (345 aa).

This sequence belongs to the AIR synthase family. As to quaternary structure, homodimer.

The protein resides in the cytoplasm. It carries out the reaction 2-formamido-N(1)-(5-O-phospho-beta-D-ribosyl)acetamidine + ATP = 5-amino-1-(5-phospho-beta-D-ribosyl)imidazole + ADP + phosphate + H(+). It functions in the pathway purine metabolism; IMP biosynthesis via de novo pathway; 5-amino-1-(5-phospho-D-ribosyl)imidazole from N(2)-formyl-N(1)-(5-phospho-D-ribosyl)glycinamide: step 2/2. The sequence is that of Phosphoribosylformylglycinamidine cyclo-ligase from Escherichia coli O157:H7.